A 462-amino-acid polypeptide reads, in one-letter code: Putative E3 ubiquitin-protein ligase XBAT35 (462 aa).

3 ANK repeats span residues 6 to 35 (SKGELLYQQVSYGNSEGIRALHRDGGDLEW), 39 to 69 (EGKTPLILACMNSELFDVAKTLIELGSNVNA), and 75 to 104 (HAGTPLHHAAKRGLENTVKLLLSHGANPLV). Disordered stretches follow at residues 277-341 (HPPV…GKAS) and 356-402 (SSPS…EGER). Polar residues predominate over residues 304-317 (SLHTTMSDPSNLNH). The segment covering 319 to 341 (SIGQASSSSGPSSSTAPPSGKAS) has biased composition (low complexity). Residues 411 to 450 (CAICLDAPSEAVCVPCGHVAGCMSCLKEIKSKNWGCPVCR) form an RING-type zinc finger.

The enzyme catalyses S-ubiquitinyl-[E2 ubiquitin-conjugating enzyme]-L-cysteine + [acceptor protein]-L-lysine = [E2 ubiquitin-conjugating enzyme]-L-cysteine + N(6)-ubiquitinyl-[acceptor protein]-L-lysine.. The protein operates within protein modification; protein ubiquitination. In terms of biological role, no E3 ubiquitin-protein ligase activity observed when associated with the E2 enzyme UBC8 in vitro. This Arabidopsis thaliana (Mouse-ear cress) protein is Putative E3 ubiquitin-protein ligase XBAT35 (XBAT35).